Here is a 690-residue protein sequence, read N- to C-terminus: UvrABC system protein B (690 aa).

In terms of domain architecture, Helicase ATP-binding spans Gln-30–Arg-188. Residue Gly-43–Thr-50 coordinates ATP. The Beta-hairpin motif lies at Tyr-96–Ile-119. One can recognise a Helicase C-terminal domain in the interval Gln-435 to Leu-601. The region spanning Tyr-641–Ala-676 is the UVR domain.

This sequence belongs to the UvrB family. Forms a heterotetramer with UvrA during the search for lesions. Interacts with UvrC in an incision complex.

It localises to the cytoplasm. The UvrABC repair system catalyzes the recognition and processing of DNA lesions. A damage recognition complex composed of 2 UvrA and 2 UvrB subunits scans DNA for abnormalities. Upon binding of the UvrA(2)B(2) complex to a putative damaged site, the DNA wraps around one UvrB monomer. DNA wrap is dependent on ATP binding by UvrB and probably causes local melting of the DNA helix, facilitating insertion of UvrB beta-hairpin between the DNA strands. Then UvrB probes one DNA strand for the presence of a lesion. If a lesion is found the UvrA subunits dissociate and the UvrB-DNA preincision complex is formed. This complex is subsequently bound by UvrC and the second UvrB is released. If no lesion is found, the DNA wraps around the other UvrB subunit that will check the other stand for damage. This chain is UvrABC system protein B, found in Chlorobium phaeobacteroides (strain BS1).